A 589-amino-acid chain; its full sequence is Probable translation initiation factor IF-2 (589 aa).

One can recognise a tr-type G domain in the interval 14–229; that stretch reads LRQPIVCVLG…LAGLAQRFLE (216 aa). A G1 region spans residues 23–30; that stretch reads GHVDHGKT. 23 to 30 is a GTP binding site; it reads GHVDHGKT. The G2 stretch occupies residues 48-52; that stretch reads GITQR. The interval 84-87 is G3; it reads DTPG. GTP contacts are provided by residues 84-88 and 138-141; these read DTPGH and NKID. The G4 stretch occupies residues 138–141; sequence NKID. Residues 206 to 208 are G5; it reads SAK.

It belongs to the TRAFAC class translation factor GTPase superfamily. Classic translation factor GTPase family. IF-2 subfamily.

In terms of biological role, function in general translation initiation by promoting the binding of the formylmethionine-tRNA to ribosomes. Seems to function along with eIF-2. The protein is Probable translation initiation factor IF-2 (infB) of Thermoplasma acidophilum (strain ATCC 25905 / DSM 1728 / JCM 9062 / NBRC 15155 / AMRC-C165).